A 200-amino-acid polypeptide reads, in one-letter code: Oligoribonuclease (200 aa).

Residues 5-169 (MVWIDCEMTG…ADIRESIAEL (165 aa)) form the Exonuclease domain. Tyrosine 126 is an active-site residue.

Belongs to the oligoribonuclease family.

It localises to the cytoplasm. Its function is as follows. 3'-to-5' exoribonuclease specific for small oligoribonucleotides. The polypeptide is Oligoribonuclease (Streptomyces coelicolor (strain ATCC BAA-471 / A3(2) / M145)).